A 115-amino-acid polypeptide reads, in one-letter code: Type 3 secretion system chaperone YscG (115 aa).

Belongs to the YscG family. As to quaternary structure, component of the heterodimeric YscE-YscG chaperone. The YscE-YscG chaperone forms a stable ternary complex with YscF/SctF.

Its subcellular location is the cytoplasm. Its function is as follows. Chaperone of the type III secretion system (T3SS), also called injectisome, which is used to inject bacterial effector proteins into eukaryotic host cells. Along with YscE, prevents premature polymerization of the YscF/SctF needle protein within the cytoplasm. Required for Yop secretion. The sequence is that of Type 3 secretion system chaperone YscG from Yersinia enterocolitica.